Here is a 72-residue protein sequence, read N- to C-terminus: Translation initiation factor IF-1 (72 aa).

In terms of domain architecture, S1-like spans 1–72; sequence MAKEDMIEVE…TRGRITYRFK (72 aa).

Belongs to the IF-1 family. As to quaternary structure, component of the 30S ribosomal translation pre-initiation complex which assembles on the 30S ribosome in the order IF-2 and IF-3, IF-1 and N-formylmethionyl-tRNA(fMet); mRNA recruitment can occur at any time during PIC assembly.

Its subcellular location is the cytoplasm. Its function is as follows. One of the essential components for the initiation of protein synthesis. Stabilizes the binding of IF-2 and IF-3 on the 30S subunit to which N-formylmethionyl-tRNA(fMet) subsequently binds. Helps modulate mRNA selection, yielding the 30S pre-initiation complex (PIC). Upon addition of the 50S ribosomal subunit IF-1, IF-2 and IF-3 are released leaving the mature 70S translation initiation complex. The protein is Translation initiation factor IF-1 of Enterococcus faecalis (strain ATCC 700802 / V583).